The chain runs to 927 residues: GPI inositol-deacylase (927 aa).

Topologically, residues 1 to 4 (MNPL) are cytoplasmic. The helical transmembrane segment at 5 to 25 (SAVFNSVVLVLLALGVTDVFF) threads the bilayer. The Lumenal segment spans residues 26 to 595 (SYESSRCSMT…QIVRFHGIYL (570 aa)). N-linked (GlcNAc...) asparagine glycosylation is found at asparagine 75 and asparagine 155. Serine 169 is a catalytic residue. Asparagine 230, asparagine 362, asparagine 397, asparagine 432, asparagine 444, and asparagine 482 each carry an N-linked (GlcNAc...) asparagine glycan. A helical transmembrane segment spans residues 596 to 616 (PVYIVANLLLAYGAQLHSILI). The Cytoplasmic segment spans residues 617 to 672 (QGSCMDLDLSFDVAAKPYKVDPVLIICKYLLNYKWFKNYWDGLMLPQLDAVQLHAY). A helical membrane pass occupies residues 673–693 (GFWFPLASLFFFIFGTSIAYW). Topologically, residues 694–733 (SSIGLQAAVRILSSLWIYLKRPSMFPKESKCITYRVYAET) are lumenal. A helical membrane pass occupies residues 734–754 (LFFAFISWRSCGTFSLLLVFL). Residues 755-821 (RYLSKVLILY…KALDDCLKMH (67 aa)) lie on the Cytoplasmic side of the membrane. A helical membrane pass occupies residues 822–842 (FTILHLNLWIVLLGLPSFIYW). Topologically, residues 843–858 (LKTLRYTIQLDPDPNR) are lumenal. A helical membrane pass occupies residues 859-879 (VSALVLIFILEILMNSTTSAI). Topologically, residues 880-887 (KSSVCLKT) are cytoplasmic. A helical transmembrane segment spans residues 888–908 (AAVLQLPLSIIVVAFGTLHLY). The Lumenal segment spans residues 909–927 (RISNLIAFSLFLHVVCCFV).

The protein belongs to the GPI inositol-deacylase family.

The protein resides in the endoplasmic reticulum membrane. Its function is as follows. GPI inositol-deacylase that catalyzes the remove of the acyl chain linked to the 2-OH position of inositol ring from the GPI-anchored protein (GPI-AP) in the endoplasmic reticulum. Initiates the post-attachment remodeling phase of GPI-AP biogenesis and participates in endoplasmic reticulum (ER)-to-Golgi transport of GPI-anchored protein. The sequence is that of GPI inositol-deacylase from Xenopus laevis (African clawed frog).